The chain runs to 163 residues: Urease accessory protein UreE (163 aa).

The disordered stretch occupies residues 130 to 163 (PFEPEPGAYGGGHGHTHSHDHSHQHDPAGHAHEH). The span at 146 to 163 (HSHDHSHQHDPAGHAHEH) shows a compositional bias: basic and acidic residues.

This sequence belongs to the UreE family.

It is found in the cytoplasm. In terms of biological role, involved in urease metallocenter assembly. Binds nickel. Probably functions as a nickel donor during metallocenter assembly. The protein is Urease accessory protein UreE of Alkalilimnicola ehrlichii (strain ATCC BAA-1101 / DSM 17681 / MLHE-1).